We begin with the raw amino-acid sequence, 75 residues long: DNA-directed RNA polymerase subunit Rpo6 (75 aa).

Belongs to the archaeal Rpo6/eukaryotic RPB6 RNA polymerase subunit family. Part of the RNA polymerase complex.

Its subcellular location is the cytoplasm. It catalyses the reaction RNA(n) + a ribonucleoside 5'-triphosphate = RNA(n+1) + diphosphate. Functionally, DNA-dependent RNA polymerase (RNAP) catalyzes the transcription of DNA into RNA using the four ribonucleoside triphosphates as substrates. In Archaeoglobus fulgidus (strain ATCC 49558 / DSM 4304 / JCM 9628 / NBRC 100126 / VC-16), this protein is DNA-directed RNA polymerase subunit Rpo6.